The chain runs to 390 residues: Protein dimmed (390 aa).

Positions 24–163 are disordered; it reads HNNNNYNTDG…RNMRRLESNE (140 aa). Polar residues-rich tracts occupy residues 29–44 and 55–64; these read YNTD…SAEG and RTSQLSNNTY. The N-linked (GlcNAc...) asparagine glycan is linked to asparagine 61. Residues 69 to 78 show a composition bias toward low complexity; sequence TDSSSQSDDT. The span at 79–90 shows a compositional bias: gly residues; that stretch reads SGGGGSSNGGGS. Residues 122-141 show a composition bias toward low complexity; the sequence is PSTIAPNSTSSNSSNANGNA. 3 N-linked (GlcNAc...) asparagine glycosylation sites follow: asparagine 128, asparagine 133, and asparagine 140. A compositionally biased stretch (basic and acidic residues) spans 151-163; the sequence is AKERNMRRLESNE. The bHLH domain occupies 156–208; it reads MRRLESNERERMRMHSLNDAFQSLREVIPHVEMERRLSKIETLTLAKNYIINL. N-linked (GlcNAc...) asparagine glycans are attached at residues asparagine 207 and asparagine 237. Residues 312–339 are disordered; sequence QQQQASHLPHHQQAMHGHGHLGASIQSQ. N-linked (GlcNAc...) asparagine glycosylation occurs at asparagine 347.

Forms homodimers via the bHLH domain. These dimers bind the core E-box sequence. Detected in the developing nervous system in the bilateral domains in the cephalic region that later on forms part of the ring gland. Concomitantly expressed in the larval central nervous system (CNS), including the dorsal chain neurons as well as several bilateral clusters of neurons: large, midline protocerebral brain cells (MC), lateral protocerebral brain cells (LC), ventral subesophageal neurons (SE) and lateral abdominal neurons, and the transverse nerves. Outside the CNS, detected in at least three classes of endocrine cells: intrinsic cells of the corpora cardiaca, midgut cells, the Inka cells, lateral Bipolar neurons associated with the segmental transverse nerve, and several peptidergic cells of the enteric nervous system. Expressed only in central and peripheral neuroendocrine secretory cells and neurosecretory neurons but not in sensory or motor neurons.

Its subcellular location is the cytoplasm. Functionally, transcription factor that regulates neurosecretory (NS) cell function and neuroendocrine cell fate. Acts as a master regulator of common NS functions such as Phm expression and neuropeptide production. Plays a role as a regulator of peptide-containing large dense-core vesicle (LDCV) production and peptidergic cell differentiation. Controls transcription of FMRFamide in Tv neuronal cells and Fur1 in Ap-let cells (Tvb and dorsal apterous cells). Also required for up-regulation of Phm in Tv and Ap-let cells, and expression of three neuropeptide genes, Ms, FMRFamide and Lk. Influences both regulated and constitutive secretory activity in neuroendocrine cells at embryonic and postembryonic level. Loss of function studies show reduced cellular levels of various neuropeptides and neuropeptide biosynthetic enzymes. This Drosophila melanogaster (Fruit fly) protein is Protein dimmed (dimm).